The chain runs to 459 residues: Phosphomethylpyrimidine synthase (459 aa).

Substrate is bound by residues Asn80, Met109, Tyr139, His175, Ser195–Gly197, Asp236–Arg239, and Glu275. Residue His279 coordinates Zn(2+). Tyr302 serves as a coordination point for substrate. His343 serves as a coordination point for Zn(2+). Cys423, Cys426, and Cys431 together coordinate [4Fe-4S] cluster.

The protein belongs to the ThiC family. [4Fe-4S] cluster is required as a cofactor.

It carries out the reaction 5-amino-1-(5-phospho-beta-D-ribosyl)imidazole + S-adenosyl-L-methionine = 4-amino-2-methyl-5-(phosphooxymethyl)pyrimidine + CO + 5'-deoxyadenosine + formate + L-methionine + 3 H(+). It participates in cofactor biosynthesis; thiamine diphosphate biosynthesis. Functionally, catalyzes the synthesis of the hydroxymethylpyrimidine phosphate (HMP-P) moiety of thiamine from aminoimidazole ribotide (AIR) in a radical S-adenosyl-L-methionine (SAM)-dependent reaction. The chain is Phosphomethylpyrimidine synthase from Gloeothece citriformis (strain PCC 7424) (Cyanothece sp. (strain PCC 7424)).